We begin with the raw amino-acid sequence, 79 residues long: Small integral membrane protein 40 (79 aa).

The chain crosses the membrane as a helical span at residues Phe35–Leu55.

The protein resides in the membrane. The polypeptide is Small integral membrane protein 40 (Homo sapiens (Human)).